We begin with the raw amino-acid sequence, 545 residues long: Chaperonin GroEL 1 (545 aa).

Residues 29–32 (TLGP), 86–90 (DGTTT), Gly-413, 479–481 (DAA), and Asp-495 contribute to the ATP site. The tract at residues 525-545 (PEPKENNPAGSGAGMGGDFDY) is disordered. Residues 535–545 (SGAGMGGDFDY) are compositionally biased toward gly residues.

Belongs to the chaperonin (HSP60) family. In terms of assembly, forms a cylinder of 14 subunits composed of two heptameric rings stacked back-to-back. Interacts with the co-chaperonin GroES.

It is found in the cytoplasm. It carries out the reaction ATP + H2O + a folded polypeptide = ADP + phosphate + an unfolded polypeptide.. In terms of biological role, together with its co-chaperonin GroES, plays an essential role in assisting protein folding. The GroEL-GroES system forms a nano-cage that allows encapsulation of the non-native substrate proteins and provides a physical environment optimized to promote and accelerate protein folding. In Thermosynechococcus vestitus (strain NIES-2133 / IAM M-273 / BP-1), this protein is Chaperonin GroEL 1.